The sequence spans 106 residues: Nucleoid-associated protein Exig_0019 (106 aa).

Low complexity predominate over residues 1–16 (MRGMGNMNNMMKQMQK). Positions 1-23 (MRGMGNMNNMMKQMQKMQKDMAK) are disordered.

Belongs to the YbaB/EbfC family. As to quaternary structure, homodimer.

Its subcellular location is the cytoplasm. It localises to the nucleoid. Its function is as follows. Binds to DNA and alters its conformation. May be involved in regulation of gene expression, nucleoid organization and DNA protection. The polypeptide is Nucleoid-associated protein Exig_0019 (Exiguobacterium sibiricum (strain DSM 17290 / CCUG 55495 / CIP 109462 / JCM 13490 / 255-15)).